Reading from the N-terminus, the 508-residue chain is Metalloprotease TIKI1 (508 aa).

An N-terminal signal peptide occupies residues 1 to 23; that stretch reads MVIIWNIFLPAFLLVLAKASLRS. Over 24 to 485 the chain is Extracellular; the sequence is SRDSANCKLN…KYIKAAQSVS (462 aa). Asn219, Asn228, Asn277, and Asn335 each carry an N-linked (GlcNAc...) asparagine glycan. Residues 486 to 506 traverse the membrane as a helical segment; that stretch reads FSLSIPSAFLLLAWCFQQVAV. The Cytoplasmic portion of the chain corresponds to 507–508; sequence LQ.

The protein belongs to the TIKI family. It depends on Mn(2+) as a cofactor. The cofactor is Co(2+). As to expression, zygotically expressed in the Spemann-Mangold organizer, in particular in the head Spemann-Mangold organizer region responsible for anterior patterning.

The protein resides in the cell membrane. Metalloprotease that acts as a negative regulator of the Wnt signaling pathway: expressed in the Spemann-Mangold organizer and is required for anterior-neural patterning in head formation in embryos. Acts by mediating the cleavage of the N-terminal residues of a subset of Wnt proteins. Following cleavage, Wnt proteins become oxidized and form large disulfide-bond oligomers, leading to their inactivation. Able to cleave wnt8. This Xenopus tropicalis (Western clawed frog) protein is Metalloprotease TIKI1 (trabd2a).